The chain runs to 638 residues: ATP-dependent rRNA helicase spb4 (638 aa).

Residues 14 to 42 (WDAVNPPLSEWVLDAVSSMGFTRMTPVQA) carry the Q motif motif. The Helicase ATP-binding domain maps to 45-249 (IPLFMAHKDV…RVGLRNPVKV (205 aa)). Position 58-65 (58-65 (AVTGSGKT)) interacts with ATP. Positions 197–200 (DEAD) match the DEAD box motif. Residues 283-437 (ALKHILNSVQ…PITVSDAEAA (155 aa)) form the Helicase C-terminal domain. A coiled-coil region spans residues 521–629 (AYKDKQREKR…AKADKDAEEG (109 aa)). A disordered region spans residues 538-638 (MAESGQQQTT…GGDEEFTGFD (101 aa)). The span at 574–597 (MKQVRQERKRWEKMTEEEKKKALE) shows a compositional bias: basic and acidic residues. Over residues 625-638 (DAEEGGDEEFTGFD) the composition is skewed to acidic residues.

This sequence belongs to the DEAD box helicase family. DDX55/SPB4 subfamily. As to quaternary structure, component of pre-60S ribosomal complexes.

The protein localises to the nucleus. The protein resides in the nucleolus. The enzyme catalyses ATP + H2O = ADP + phosphate + H(+). Functionally, ATP-binding RNA helicase involved in the biogenesis of 60S ribosomal subunits. Binds 90S pre-ribosomal particles and dissociates from pre-60S ribosomal particles after processing of 27SB pre-rRNA. Required for the normal formation of 18S rRNA through the processing of pre-rRNAs at sites A0, A1 and A2, and the normal formation of 25S and 5.8S rRNAs through the processing of pre-rRNAs at sites C1 and C2. In Emericella nidulans (strain FGSC A4 / ATCC 38163 / CBS 112.46 / NRRL 194 / M139) (Aspergillus nidulans), this protein is ATP-dependent rRNA helicase spb4.